The chain runs to 399 residues: CCA-adding enzyme (399 aa).

ATP is bound by residues Gly-28 and Arg-31. Residues Gly-28 and Arg-31 each contribute to the CTP site. Mg(2+) contacts are provided by Asp-41 and Asp-43. 5 residues coordinate ATP: Arg-112, Asp-155, Arg-158, Arg-161, and Arg-164. Positions 112, 155, 158, 161, and 164 each coordinate CTP.

This sequence belongs to the tRNA nucleotidyltransferase/poly(A) polymerase family. Bacterial CCA-adding enzyme type 3 subfamily. As to quaternary structure, homodimer. The cofactor is Mg(2+).

It carries out the reaction a tRNA precursor + 2 CTP + ATP = a tRNA with a 3' CCA end + 3 diphosphate. The catalysed reaction is a tRNA with a 3' CCA end + 2 CTP + ATP = a tRNA with a 3' CCACCA end + 3 diphosphate. Catalyzes the addition and repair of the essential 3'-terminal CCA sequence in tRNAs without using a nucleic acid template. Adds these three nucleotides in the order of C, C, and A to the tRNA nucleotide-73, using CTP and ATP as substrates and producing inorganic pyrophosphate. tRNA 3'-terminal CCA addition is required both for tRNA processing and repair. Also involved in tRNA surveillance by mediating tandem CCA addition to generate a CCACCA at the 3' terminus of unstable tRNAs. While stable tRNAs receive only 3'-terminal CCA, unstable tRNAs are marked with CCACCA and rapidly degraded. The sequence is that of CCA-adding enzyme from Staphylococcus saprophyticus subsp. saprophyticus (strain ATCC 15305 / DSM 20229 / NCIMB 8711 / NCTC 7292 / S-41).